Here is a 149-residue protein sequence, read N- to C-terminus: 3-dehydroquinate dehydratase (149 aa).

Tyr-26 (proton acceptor) is an active-site residue. Asn-77, His-83, and Asp-90 together coordinate substrate. Residue His-103 is the Proton donor of the active site. Substrate contacts are provided by residues 104–105 and Arg-114; that span reads LS.

Belongs to the type-II 3-dehydroquinase family. In terms of assembly, homododecamer.

The enzyme catalyses 3-dehydroquinate = 3-dehydroshikimate + H2O. It participates in metabolic intermediate biosynthesis; chorismate biosynthesis; chorismate from D-erythrose 4-phosphate and phosphoenolpyruvate: step 3/7. Catalyzes a trans-dehydration via an enolate intermediate. This Vibrio parahaemolyticus serotype O3:K6 (strain RIMD 2210633) protein is 3-dehydroquinate dehydratase.